A 310-amino-acid chain; its full sequence is Small ribosomal subunit protein uS2 (310 aa).

Disordered regions lie at residues 213 to 240 (EEQA…GGAA) and 271 to 310 (WDSV…TDWA). Residues 216-227 (AALARQQEEANA) show a composition bias toward low complexity. The segment covering 297-310 (VTMQEQAKPSTDWA) has biased composition (polar residues).

It belongs to the universal ribosomal protein uS2 family. As to quaternary structure, component of the small ribosomal subunit. Mature ribosomes consist of a small (40S) and a large (60S) subunit. The 40S subunit contains about 33 different proteins and 1 molecule of RNA (18S). The 60S subunit contains about 49 different proteins and 3 molecules of RNA (28S, 5.8S and 5S). Interacts with ribosomal protein S21.

It localises to the cytoplasm. In terms of biological role, required for the assembly and/or stability of the 40S ribosomal subunit. Required for the processing of the 20S rRNA-precursor to mature 18S rRNA in a late step of the maturation of 40S ribosomal subunits. This is Small ribosomal subunit protein uS2 from Nematostella vectensis (Starlet sea anemone).